The chain runs to 312 residues: Coproporphyrin III ferrochelatase (312 aa).

Residues tyrosine 13, arginine 30, 46 to 47, serine 54, and tyrosine 125 each bind Fe-coproporphyrin III; that span reads RY. Positions 183 and 264 each coordinate Fe(2+).

Belongs to the ferrochelatase family.

The protein resides in the cytoplasm. The enzyme catalyses Fe-coproporphyrin III + 2 H(+) = coproporphyrin III + Fe(2+). It participates in porphyrin-containing compound metabolism; protoheme biosynthesis. Functionally, involved in coproporphyrin-dependent heme b biosynthesis. Catalyzes the insertion of ferrous iron into coproporphyrin III to form Fe-coproporphyrin III. This chain is Coproporphyrin III ferrochelatase, found in Bacillus pumilus (strain SAFR-032).